The chain runs to 140 residues: Profilin (140 aa).

N-acetylserine is present on S2.

Belongs to the profilin family. As to quaternary structure, occurs in many kinds of cells as a complex with monomeric actin in a 1:1 ratio.

It is found in the cytoplasm. The protein localises to the cytoskeleton. Binds to actin and affects the structure of the cytoskeleton. At high concentrations, profilin prevents the polymerization of actin, whereas it enhances it at low concentrations. By binding to PIP2, it inhibits the formation of IP3 and DG. This chain is Profilin, found in Clypeaster japonicus (Sand dollar).